We begin with the raw amino-acid sequence, 105 residues long: TPR repeat-containing protein PA0015 (105 aa).

TPR repeat units lie at residues 17-50 and 52-84; these read ALLRFGLGKGYLDAGDAERAAEHLQRCVEQDPKY and AGWKLLGKARQAAGDLAGARQAWEQGLATAATH.

This chain is TPR repeat-containing protein PA0015, found in Pseudomonas aeruginosa (strain ATCC 15692 / DSM 22644 / CIP 104116 / JCM 14847 / LMG 12228 / 1C / PRS 101 / PAO1).